Reading from the N-terminus, the 177-residue chain is Large ribosomal subunit protein uL16 (177 aa).

This sequence belongs to the universal ribosomal protein uL16 family. Part of the 50S ribosomal subunit. Weakly binds 5S rRNA. Probably binds the A and P site tRNAs.

Its function is as follows. This is 1 of 5 proteins that mediate the attachment of the 5S rRNA onto the large ribosomal subunit, stabilizing the orientation of adjacent RNA domains. Modeling places the A and P site tRNAs in close proximity to this protein. The chain is Large ribosomal subunit protein uL16 from Haloarcula marismortui (strain ATCC 43049 / DSM 3752 / JCM 8966 / VKM B-1809) (Halobacterium marismortui).